The sequence spans 137 residues: Large ribosomal subunit protein uL13 (137 aa).

This sequence belongs to the universal ribosomal protein uL13 family. In terms of assembly, part of the 50S ribosomal subunit.

Functionally, this protein is one of the early assembly proteins of the 50S ribosomal subunit, although it is not seen to bind rRNA by itself. It is important during the early stages of 50S assembly. This is Large ribosomal subunit protein uL13 from Methanococcus maripaludis (strain DSM 14266 / JCM 13030 / NBRC 101832 / S2 / LL).